We begin with the raw amino-acid sequence, 426 residues long: Probable indole-3-pyruvate monooxygenase YUCCA8 (426 aa).

29–34 (GAGPSG) provides a ligand contact to FAD. 199-204 (GCGNSG) provides a ligand contact to NADP(+).

It belongs to the FMO family. It depends on FAD as a cofactor. In terms of tissue distribution, expressed in root tips and in hydathodes. Expressed in root vasculature and quiescent center, but not in the meristematic zone of the root tip.

The catalysed reaction is indole-3-pyruvate + NADPH + O2 + H(+) = (indol-3-yl)acetate + CO2 + NADP(+) + H2O. It functions in the pathway plant hormone metabolism; auxin biosynthesis. Involved in auxin biosynthesis. Belongs to the set of redundant YUCCA genes probably responsible for auxin biosynthesis in roots. The polypeptide is Probable indole-3-pyruvate monooxygenase YUCCA8 (YUC8) (Arabidopsis thaliana (Mouse-ear cress)).